Here is a 194-residue protein sequence, read N- to C-terminus: dITP/XTP pyrophosphatase (194 aa).

8-13 (TNNPHK) is a substrate binding site. The active-site Proton acceptor is the aspartate 69. Aspartate 69 provides a ligand contact to Mg(2+). Substrate contacts are provided by residues threonine 70, 150-153 (FGYD), lysine 173, and 178-179 (HR).

Belongs to the HAM1 NTPase family. As to quaternary structure, homodimer. Mg(2+) is required as a cofactor.

It catalyses the reaction XTP + H2O = XMP + diphosphate + H(+). The enzyme catalyses dITP + H2O = dIMP + diphosphate + H(+). It carries out the reaction ITP + H2O = IMP + diphosphate + H(+). Functionally, pyrophosphatase that catalyzes the hydrolysis of nucleoside triphosphates to their monophosphate derivatives, with a high preference for the non-canonical purine nucleotides XTP (xanthosine triphosphate), dITP (deoxyinosine triphosphate) and ITP. Seems to function as a house-cleaning enzyme that removes non-canonical purine nucleotides from the nucleotide pool, thus preventing their incorporation into DNA/RNA and avoiding chromosomal lesions. The sequence is that of dITP/XTP pyrophosphatase from Porphyromonas gingivalis (strain ATCC BAA-308 / W83).